The sequence spans 34 residues: Photosystem II reaction center protein Psb30 (34 aa).

The helical transmembrane segment at 6-26 threads the bilayer; it reads VIGQLIATGAIMLAGPAVIVL.

It belongs to the Psb30/Ycf12 family. In terms of assembly, PSII is composed of 1 copy each of membrane proteins PsbA, PsbB, PsbC, PsbD, PsbE, PsbF, PsbH, PsbI, PsbJ, PsbK, PsbL, PsbM, PsbT, PsbX, PsbY, PsbZ, Psb30/Ycf12, peripheral proteins of the oxygen-evolving complex and a large number of cofactors. It forms dimeric complexes.

It is found in the plastid. The protein resides in the chloroplast thylakoid membrane. A core subunit of photosystem II (PSII), probably helps stabilize the reaction center. In Trieres chinensis (Marine centric diatom), this protein is Photosystem II reaction center protein Psb30.